The chain runs to 701 residues: Elongation factor G (701 aa).

Residues 8–286 (ERIRNIGIIA…AIVHYLPSPV (279 aa)) enclose the tr-type G domain. GTP-binding positions include 17–24 (AHIDAGKT), 85–89 (DTPGH), and 139–142 (NKMD).

It belongs to the TRAFAC class translation factor GTPase superfamily. Classic translation factor GTPase family. EF-G/EF-2 subfamily.

It localises to the cytoplasm. Catalyzes the GTP-dependent ribosomal translocation step during translation elongation. During this step, the ribosome changes from the pre-translocational (PRE) to the post-translocational (POST) state as the newly formed A-site-bound peptidyl-tRNA and P-site-bound deacylated tRNA move to the P and E sites, respectively. Catalyzes the coordinated movement of the two tRNA molecules, the mRNA and conformational changes in the ribosome. In Roseiflexus sp. (strain RS-1), this protein is Elongation factor G.